A 387-amino-acid chain; its full sequence is Mitogen-activated protein kinase homolog MMK1 (387 aa).

A Protein kinase domain is found at 55-340 (KPPIMPIGKG…VEDALAHPYL (286 aa)). ATP contacts are provided by residues 61 to 69 (IGKGAYGIV) and Lys84. Asp181 functions as the Proton acceptor in the catalytic mechanism. The residue at position 213 (Thr213) is a Phosphothreonine. A TXY motif is present at residues 213–215 (TEY). Tyr215 is modified (phosphotyrosine).

This sequence belongs to the protein kinase superfamily. CMGC Ser/Thr protein kinase family. MAP kinase subfamily. Mg(2+) serves as cofactor. Post-translationally, dually phosphorylated on Thr-213 and Tyr-215, which activates the enzyme. Autophosphorylated. As to expression, roots and stems.

It catalyses the reaction L-seryl-[protein] + ATP = O-phospho-L-seryl-[protein] + ADP + H(+). It carries out the reaction L-threonyl-[protein] + ATP = O-phospho-L-threonyl-[protein] + ADP + H(+). Activated by tyrosine and threonine phosphorylation. In terms of biological role, may play a role in the mitogenic induction of symbiotic root nodules on Alfalfa by Rhizobium signal molecules. This is Mitogen-activated protein kinase homolog MMK1 (MMK1) from Medicago sativa (Alfalfa).